A 78-amino-acid polypeptide reads, in one-letter code: Consomatin Nc1 (78 aa).

The first 22 residues, Met1 to Gly22, serve as a signal peptide directing secretion. Positions Gly23–Arg59 are excised as a propeptide. A 4-carboxyglutamate modification is found at Glu61. Cys62 and Cys67 are disulfide-bonded. Trp64 carries the post-translational modification D-tryptophan. Pro70 carries the 4-hydroxyproline modification. Positions Leu71–Gly78 are excised as a propeptide.

This sequence belongs to the conotoxin C superfamily. Consomatin family. As to expression, expressed by the venom duct.

It is found in the secreted. Functionally, moderately activates human somatostatin receptors (SSTR) with a preferential activation of SSTR1 and SSTR4. In vivo, does not cause behavioral changes in mice within a few minutes of intracranial injection, but causes a progressive loss of movement thereafter. Four to five hours after injection, mice recover, even with the highest dose tested. Shows antinociception and antihyperalgesia activities in two mouse models of acute pain, most probably by acting outside the central nervous system. The chain is Consomatin Nc1 from Conus neocostatus (Cone snail).